Consider the following 182-residue polypeptide: Large ribosomal subunit protein bL25 (182 aa).

The protein belongs to the bacterial ribosomal protein bL25 family. CTC subfamily. As to quaternary structure, part of the 50S ribosomal subunit; part of the 5S rRNA/L5/L18/L25 subcomplex. Contacts the 5S rRNA. Binds to the 5S rRNA independently of L5 and L18.

Functionally, this is one of the proteins that binds to the 5S RNA in the ribosome where it forms part of the central protuberance. This is Large ribosomal subunit protein bL25 from Borrelia turicatae (strain 91E135).